The primary structure comprises 324 residues: MSSNNPTPNLEQLMLEARQLMKDLGLPDKMQGDTPIFVLLVMLDMKPAKSWSEANNQKWGITPLMNKMRELGFKNLAPNTRENIRDDCVGQLVDAELATENPDKPRPKNSPKYCYQINQEVLYLVKKIGSADYPIALNNFLSNYQTIKHKYQAKRQSQRLNVKIAHNFSVSIAPGGQGVLIKSVLQDFCKYFNIDKVLYIDNTVDTARGYSPFIDENLINYLGIDIDKFKNSYDKPDIVLYKSDNKYLIIIEAVKTGGAINVERRDRLLSLFENVDVKLSFVNAFESFKELKRLTKEITRETHAWIMEFPDHMIHFNGDQYLFH.

The protein belongs to the BsuBI/PstI type II restriction endonuclease family. Mg(2+) is required as a cofactor.

It catalyses the reaction Endonucleolytic cleavage of DNA to give specific double-stranded fragments with terminal 5'-phosphates.. Activated by K(+) and Na(+) ions, whereas NH(4)(+) ions appear to inhibit endonuclease activity. Its function is as follows. A P subtype restriction enzyme that recognizes the double-stranded sequence 5'-CTGCAG-3' and cleaves after A-5. This Arthrospira platensis (strain NIES-39 / UTEX 3086 / IAM M-135) (Spirulina platensis) protein is Type II restriction enzyme AplI (aplIR).